Reading from the N-terminus, the 478-residue chain is Lactate utilization protein B (478 aa).

2 4Fe-4S ferredoxin-type domains span residues 303–333 and 352–381; these read GTEF…GHAY and YDDH…LHEQ. The [4Fe-4S] cluster site is built by cysteine 312, cysteine 315, cysteine 318, cysteine 322, cysteine 365, cysteine 368, and cysteine 372.

The protein belongs to the LutB/YkgF family.

Its function is as follows. Is involved in L-lactate degradation and allows cells to grow with lactate as the sole carbon source. Has probably a role as an electron transporter during oxidation of L-lactate. This Oceanobacillus iheyensis (strain DSM 14371 / CIP 107618 / JCM 11309 / KCTC 3954 / HTE831) protein is Lactate utilization protein B.